Reading from the N-terminus, the 370-residue chain is Peptidyl-prolyl cis-trans isomerase D (370 aa).

The residue at position 5 (Ser5) is a Phosphoserine. Positions 19-183 constitute a PPIase cyclophilin-type domain; it reads FFDVDIGGER…KLCVIAECGE (165 aa). Lys171 carries the N6-acetyllysine modification. The interval 185–215 is chaperone activity; that stretch reads KEGDDWGIFPKDGSGDSHPDFPEDADIDLKD. Ser198 carries the phosphoserine modification. Residues 214–370 form an interaction with HSP90AB1 region; it reads KDVDKILLIS…EKAVYAKMFA (157 aa). 3 TPR repeats span residues 223 to 256, 273 to 306, and 307 to 340; these read SEDL…VDSS, LSCV…DPSN, and TKAL…APGD.

The protein belongs to the cyclophilin-type PPIase family. PPIase D subfamily. As to quaternary structure, identified in ESR1 or NR3C1/GCR steroid receptor-chaperone complexes. Found in HSP90 chaperone complexes with kinase clients LCK or EIF2AK1. Two monomers associate with one HSP90 homodimer. Interacts with HSP90AA1. Interacts with HSP90AB1; PPID and FKBP4 compete for binding to HSP90AB1 and the interaction is mutually exclusive with the PPID:HSPA8 interaction. Interacts with HSPA8; PPID and STIP1 but not FKBP4 compete for binding to HSPA8 and the interaction is mutually exclusive with the PPID:HSP90AB1 interaction. Interacts with S100A1 and S100A2; the interactions dissociate the PPID:HSP90AA1 interaction. Interacts with S100A6. Interacts with MYB, ILF2, XRCC6, RACK1 and RPS3. Interacts with cytoplasmic dynein 1 intermediate chain (DYNC1I1 or DYNC1I2).

It is found in the cytoplasm. It localises to the nucleus. The protein resides in the nucleolus. The protein localises to the nucleoplasm. The catalysed reaction is [protein]-peptidylproline (omega=180) = [protein]-peptidylproline (omega=0). Less sensitive to inhibition by cyclosporin A than is CYP-18. Functionally, PPIase that catalyzes the cis-trans isomerization of proline imidic peptide bonds in oligopeptides and may therefore assist protein folding. Proposed to act as a co-chaperone in HSP90 complexes such as in unligated steroid receptors heterocomplexes. Different co-chaperones seem to compete for association with HSP90 thus establishing distinct HSP90-co-chaperone-receptor complexes with the potential to exert tissue-specific receptor activity control. May have a preference for estrogen receptor complexes and is not found in glucocorticoid receptor complexes. May be involved in cytoplasmic dynein-dependent movement of the receptor from the cytoplasm to the nucleus. May regulate MYB by inhibiting its DNA-binding activity. Involved in regulation of AHR signaling by promoting the formation of the AHR:ARNT dimer; the function is independent of HSP90 but requires the chaperone activity region. Involved in regulation of UV radiation-induced apoptosis. This chain is Peptidyl-prolyl cis-trans isomerase D, found in Mus musculus (Mouse).